Here is a 258-residue protein sequence, read N- to C-terminus: Alpha-fibrinogenase albofibrase (258 aa).

The N-terminal stretch at 1–18 (MVLIRVLANLLILQLSYA) is a signal peptide. The propeptide occupies 19-24 (QKSSEL). Positions 25 to 249 (VVGGDECNIN…YNDWIQSIIA (225 aa)) constitute a Peptidase S1 domain. 6 disulfides stabilise this stretch: Cys31-Cys163, Cys50-Cys66, Cys98-Cys256, Cys142-Cys210, Cys174-Cys189, and Cys200-Cys225. Asn44 carries N-linked (GlcNAc...) asparagine glycosylation. Active-site charge relay system residues include His65 and Asp110. Ser204 (charge relay system) is an active-site residue.

The protein belongs to the peptidase S1 family. Snake venom subfamily. In terms of assembly, monomer. In terms of tissue distribution, expressed by the venom gland.

It localises to the secreted. In terms of biological role, the recombinant protein has fibrinogenolytic activity against the Aalpha chain (FGA) of fibrinogen. Activates plasminogen (PLG) (is 4-fold less active than urokinase). Has weak thrombin-like enzyme activity. Has enzymatic activity against a trypsin-like substrate (S-3013) and shows a weaker activity on an activated protein C substrate (S-3125). In Trimeresurus albolabris (White-lipped pit viper), this protein is Alpha-fibrinogenase albofibrase.